A 48-amino-acid chain; its full sequence is Photosystem II reaction center protein K (48 aa).

Residues 1 to 11 (MFLFNLEQSIG) constitute a propeptide that is removed on maturation. Residues 23 to 43 (LVDVLPIIPLLFLLLAFVWQA) traverse the membrane as a helical segment.

It belongs to the PsbK family. PSII is composed of 1 copy each of membrane proteins PsbA, PsbB, PsbC, PsbD, PsbE, PsbF, PsbH, PsbI, PsbJ, PsbK, PsbL, PsbM, PsbT, PsbX, PsbY, PsbZ, Psb30/Ycf12, at least 3 peripheral proteins of the oxygen-evolving complex and a large number of cofactors. It forms dimeric complexes.

It is found in the plastid. It localises to the chloroplast thylakoid membrane. In terms of biological role, one of the components of the core complex of photosystem II (PSII). PSII is a light-driven water:plastoquinone oxidoreductase that uses light energy to abstract electrons from H(2)O, generating O(2) and a proton gradient subsequently used for ATP formation. It consists of a core antenna complex that captures photons, and an electron transfer chain that converts photonic excitation into a charge separation. In Lepocinclis buetschlii, this protein is Photosystem II reaction center protein K.